A 628-amino-acid polypeptide reads, in one-letter code: tRNA (guanine(37)-N(1))-methyltransferase (628 aa).

Residues His265, 303–304 (DL), 342–343 (DG), and Asn445 contribute to the S-adenosyl-L-methionine site.

Belongs to the class I-like SAM-binding methyltransferase superfamily. TRM5/TYW2 family. In terms of assembly, monomer.

Its subcellular location is the mitochondrion matrix. The protein localises to the nucleus. It is found in the cytoplasm. It carries out the reaction guanosine(37) in tRNA + S-adenosyl-L-methionine = N(1)-methylguanosine(37) in tRNA + S-adenosyl-L-homocysteine + H(+). Functionally, specifically methylates the N1 position of guanosine-37 in various cytoplasmic and mitochondrial tRNAs. Methylation is not dependent on the nature of the nucleoside 5' of the target nucleoside. This is the first step in the biosynthesis of wybutosine (yW), a modified base adjacent to the anticodon of tRNAs and required for accurate decoding. The polypeptide is tRNA (guanine(37)-N(1))-methyltransferase (Mycosarcoma maydis (Corn smut fungus)).